The chain runs to 98 residues: MGHLLGLGAVLFCISLAGIFLNRKNVIVLLMSIELMLLSVNVNFIAFSRELGDTAGQLFVFFILTVAAAEAAIGLAILVTLFRTRRTINVAEVDTLKG.

The next 3 helical transmembrane spans lie at 1-21, 27-47, and 59-79; these read MGHL…GIFL, IVLL…FIAF, and FVFF…AILV.

Belongs to the complex I subunit 4L family. NDH-1 is composed of 14 different subunits. Subunits NuoA, H, J, K, L, M, N constitute the membrane sector of the complex.

The protein resides in the cell inner membrane. The catalysed reaction is a quinone + NADH + 5 H(+)(in) = a quinol + NAD(+) + 4 H(+)(out). NDH-1 shuttles electrons from NADH, via FMN and iron-sulfur (Fe-S) centers, to quinones in the respiratory chain. The immediate electron acceptor for the enzyme in this species is believed to be ubiquinone. Couples the redox reaction to proton translocation (for every two electrons transferred, four hydrogen ions are translocated across the cytoplasmic membrane), and thus conserves the redox energy in a proton gradient. The sequence is that of NADH-quinone oxidoreductase subunit K from Xanthomonas oryzae pv. oryzae (strain PXO99A).